The sequence spans 253 residues: Chitooligosaccharide deacetylase (253 aa).

Residues histidine 61 and histidine 126 each coordinate Mg(2+).

Belongs to the YdjC deacetylase family. ChbG subfamily. Homodimer. The cofactor is Mg(2+).

It localises to the cytoplasm. It carries out the reaction N,N'-diacetylchitobiose + H2O = N-acetyl-beta-D-glucosaminyl-(1-&gt;4)-D-glucosamine + acetate. It catalyses the reaction diacetylchitobiose-6'-phosphate + H2O = N'-monoacetylchitobiose-6'-phosphate + acetate. The protein operates within glycan degradation; chitin degradation. Involved in the degradation of chitin. ChbG is essential for growth on the acetylated chitooligosaccharides chitobiose and chitotriose but is dispensable for growth on cellobiose and chitosan dimer, the deacetylated form of chitobiose. Deacetylation of chitobiose-6-P and chitotriose-6-P is necessary for both the activation of the chb promoter by the regulatory protein ChbR and the hydrolysis of phosphorylated beta-glucosides by the phospho-beta-glucosidase ChbF. Catalyzes the removal of only one acetyl group from chitobiose-6-P to yield monoacetylchitobiose-6-P, the inducer of ChbR and the substrate of ChbF. The polypeptide is Chitooligosaccharide deacetylase (Yersinia enterocolitica serotype O:8 / biotype 1B (strain NCTC 13174 / 8081)).